Consider the following 226-residue polypeptide: MRLCVALDMASKDENLALVRELKGLDLWLKVGLRSYLRDGAKFIEELKGAGEFKIFLDLKLYDIPNTMADAAEVVSKIGVDMINLHASAGERAMKTVMERLNALQNRPLVLAVSALTSFSESEFEAVYNDTLSRSVRKFSQMSFEAGLDGMVCSVFESKLIKEVTNQNFITLCPGVRPFGESAGDQKRVANLVSAKQEDSDFIVVGRPIYENENPREICERILEQI.

Residues D8, K30, 58 to 67 (DLKLYDIPNT), T117, R177, Q186, G206, and R207 each bind substrate. K60 functions as the Proton donor in the catalytic mechanism.

The protein belongs to the OMP decarboxylase family. Type 1 subfamily. As to quaternary structure, homodimer.

The enzyme catalyses orotidine 5'-phosphate + H(+) = UMP + CO2. The protein operates within pyrimidine metabolism; UMP biosynthesis via de novo pathway; UMP from orotate: step 2/2. Catalyzes the decarboxylation of orotidine 5'-monophosphate (OMP) to uridine 5'-monophosphate (UMP). In Campylobacter concisus (strain 13826), this protein is Orotidine 5'-phosphate decarboxylase.